Reading from the N-terminus, the 656-residue chain is ATP-dependent zinc metalloprotease FtsH (656 aa).

The Cytoplasmic portion of the chain corresponds to 1–10 (MGDNRWLKNS). A helical membrane pass occupies residues 11-31 (FVYLIILVAALALFFQYLGPG). The Extracellular segment spans residues 32 to 116 (ASQTEEKGIA…IVQPAPAWGG (85 aa)). Residues 117–137 (LLSIFTILLPTLLLIGFFVFF) traverse the membrane as a helical segment. Over 138–656 (MRQAQGSNNQ…GLGGPSPLPA (519 aa)) the chain is Cytoplasmic. 209-216 (GPPGTGKT) provides a ligand contact to ATP. H432 is a binding site for Zn(2+). E433 is an active-site residue. Zn(2+) is bound by residues H436 and D511. Residues 622-632 (FSKSGSTTPNG) show a composition bias toward polar residues. Residues 622 to 656 (FSKSGSTTPNGRTEDRPAQPDAPQMGLGGPSPLPA) are disordered.

It in the central section; belongs to the AAA ATPase family. The protein in the C-terminal section; belongs to the peptidase M41 family. Homohexamer. Requires Zn(2+) as cofactor.

It is found in the cell membrane. Its function is as follows. Acts as a processive, ATP-dependent zinc metallopeptidase for both cytoplasmic and membrane proteins. Plays a role in the quality control of integral membrane proteins. The polypeptide is ATP-dependent zinc metalloprotease FtsH (Chloroflexus aggregans (strain MD-66 / DSM 9485)).